The following is a 131-amino-acid chain: Sec-independent protein translocase protein TatB (131 aa).

Residues 2–22 (LGSLSWEHMLVLVVVGLVVLG) form a helical membrane-spanning segment. Positions 96–131 (AFDRPVNGAAAQPPPAPAPPPEPHRPGQTPFDADAT) are disordered. Residues 107–116 (QPPPAPAPPP) are compositionally biased toward pro residues.

This sequence belongs to the TatB family. In terms of assembly, the Tat system comprises two distinct complexes: a TatABC complex, containing multiple copies of TatA, TatB and TatC subunits, and a separate TatA complex, containing only TatA subunits. Substrates initially bind to the TatABC complex, which probably triggers association of the separate TatA complex to form the active translocon.

It is found in the cell membrane. Its function is as follows. Part of the twin-arginine translocation (Tat) system that transports large folded proteins containing a characteristic twin-arginine motif in their signal peptide across membranes. Together with TatC, TatB is part of a receptor directly interacting with Tat signal peptides. TatB may form an oligomeric binding site that transiently accommodates folded Tat precursor proteins before their translocation. The protein is Sec-independent protein translocase protein TatB of Mycobacterium avium (strain 104).